Here is a 613-residue protein sequence, read N- to C-terminus: Na(+)/H(+) antiporter NhaA 1 (613 aa).

Positions 1 to 24 (MTEASARTIGPLPSRFSRDPKTPR) are disordered. Residues 1–408 (MTEASARTIG…DPARQDEARV (408 aa)) are na(+)/H(+) antiporter NhaA. Helical transmembrane passes span 29 to 49 (AAAA…NSPW), 81 to 101 (GLMA…FVIG), 110 to 130 (AVPV…FLTF), 138 to 158 (QAWG…LAVI), 168 to 188 (IFLL…IALF), 191 to 211 (DDLK…LAMV), 231 to 251 (IALY…AVLI), 300 to 320 (AVGP…NAGV), 337 to 357 (WGIV…ATAL), 377 to 397 (GGAA…DVAI), and 408 to 428 (VGVL…FRIT). The Thioredoxin domain maps to 409–613 (GVLIASVLAF…SLIRALEAGR (205 aa)).

It in the N-terminal section; belongs to the NhaA Na(+)/H(+) (TC 2.A.33) antiporter family.

The protein resides in the cell membrane. It carries out the reaction Na(+)(in) + 2 H(+)(out) = Na(+)(out) + 2 H(+)(in). Na(+)/H(+) antiporter that extrudes sodium in exchange for external protons. The chain is Na(+)/H(+) antiporter NhaA 1 from Mycobacterium sp. (strain JLS).